We begin with the raw amino-acid sequence, 936 residues long: Pre-rRNA-processing protein FHL1 (936 aa).

2 disordered regions span residues 1-90 (MDGE…NGNL) and 139-169 (DHSR…QDNT). A compositionally biased stretch (polar residues) spans 9–29 (ESSNHVGTSSPTTETQFTIDS). Ser-44 is modified (phosphoserine). Over residues 139–150 (DHSREVSSKEDI) the composition is skewed to basic and acidic residues. Ser-228 is subject to Phosphoserine. Phosphothreonine occurs at positions 230 and 247. The segment covering 243-257 (PPQNTVTENNSTDAE) has biased composition (polar residues). The disordered stretch occupies residues 243 to 270 (PPQNTVTENNSTDAETTQRKLSEPIDAS). Residue Ser-264 is modified to Phosphoserine. Residues 300-357 (AIIGRRSENDFSHKVDVNLGPSKSISRRHAQIFYNFGTGRFELSIIGKNGAFVDDIFV) enclose the FHA domain. Basic and acidic residues predominate over residues 384-395 (EQERNDDSKSPE). Residues 384-442 (EQERNDDSKSPENADIAESEINTRNLKKNEPKSKKKITTGAKPKKAQTKPAVKKEKKPP) are disordered. The segment covering 416–430 (SKKKITTGAKPKKAQ) has biased composition (basic residues). Residues 460–552 (TKPTVSYSAM…ERQKKKQSEI (93 aa)) constitute a DNA-binding region (fork-head). Residues 718 to 936 (AKAQHSKPIR…EVNVSLEEKL (219 aa)) are disordered. 2 stretches are compositionally biased toward polar residues: residues 742–753 (SQLSASASSHPN) and 765–777 (DPSS…QPRQ). 2 stretches are compositionally biased toward low complexity: residues 779-795 (ARAT…AAAS) and 815-853 (ESGT…TSSE). The span at 854–863 (SESESDSGSE) shows a compositional bias: acidic residues. Basic and acidic residues predominate over residues 864–911 (VDEKNNKNEKIDSESIKNNESKDDIPSKDENSSNDNREISKTDEEGHD).

The protein resides in the nucleus. Acts as a transcriptional regulator that recruits coactivator IFH1 to the promoters of ribosomal protein genes. Recruited to ribosomal gene promoters by RAP1. The polypeptide is Pre-rRNA-processing protein FHL1 (FHL1) (Saccharomyces cerevisiae (strain ATCC 204508 / S288c) (Baker's yeast)).